Consider the following 28-residue polypeptide: Putative antitoxin AF_1079 (28 aa).

The protein belongs to the UPF0165 family.

Functionally, possibly the antitoxin component of a type II toxin-antitoxin (TA) system. This Archaeoglobus fulgidus (strain ATCC 49558 / DSM 4304 / JCM 9628 / NBRC 100126 / VC-16) protein is Putative antitoxin AF_1079.